The primary structure comprises 280 residues: Phosphatidylglycerol--prolipoprotein diacylglyceryl transferase (280 aa).

Helical transmembrane passes span 12–32 (FGPF…LIGL), 52–72 (LLPL…VAFE), 86–106 (IWEG…TLIL), and 115–133 (FWDV…QSIG). R134 contacts a 1,2-diacyl-sn-glycero-3-phospho-(1'-sn-glycerol). Transmembrane regions (helical) follow at residues 173–193 (PTFL…ILLF), 203–223 (LPAG…RVWI), and 246–266 (IAQL…WWLY).

Belongs to the Lgt family.

The protein resides in the cell inner membrane. The catalysed reaction is L-cysteinyl-[prolipoprotein] + a 1,2-diacyl-sn-glycero-3-phospho-(1'-sn-glycerol) = an S-1,2-diacyl-sn-glyceryl-L-cysteinyl-[prolipoprotein] + sn-glycerol 1-phosphate + H(+). Its pathway is protein modification; lipoprotein biosynthesis (diacylglyceryl transfer). Catalyzes the transfer of the diacylglyceryl group from phosphatidylglycerol to the sulfhydryl group of the N-terminal cysteine of a prolipoprotein, the first step in the formation of mature lipoproteins. The protein is Phosphatidylglycerol--prolipoprotein diacylglyceryl transferase of Synechococcus sp. (strain CC9902).